Consider the following 134-residue polypeptide: Large ribosomal subunit protein bL20 (134 aa).

This sequence belongs to the bacterial ribosomal protein bL20 family.

Binds directly to 23S ribosomal RNA and is necessary for the in vitro assembly process of the 50S ribosomal subunit. It is not involved in the protein synthesizing functions of that subunit. This Rhizobium leguminosarum bv. trifolii (strain WSM2304) protein is Large ribosomal subunit protein bL20.